Here is a 252-residue protein sequence, read N- to C-terminus: Enolase-phosphatase E1 (252 aa).

Residues Asp18 and Glu20 each coordinate Mg(2+). Residues 149 to 150 (SS) and Lys184 each bind substrate. A Mg(2+)-binding site is contributed by Asp209.

The protein belongs to the HAD-like hydrolase superfamily. MasA/MtnC family. As to quaternary structure, monomer. Mg(2+) serves as cofactor.

It localises to the cytoplasm. It is found in the nucleus. It carries out the reaction 5-methylsulfanyl-2,3-dioxopentyl phosphate + H2O = 1,2-dihydroxy-5-(methylsulfanyl)pent-1-en-3-one + phosphate. The protein operates within amino-acid biosynthesis; L-methionine biosynthesis via salvage pathway; L-methionine from S-methyl-5-thio-alpha-D-ribose 1-phosphate: step 3/6. It functions in the pathway amino-acid biosynthesis; L-methionine biosynthesis via salvage pathway; L-methionine from S-methyl-5-thio-alpha-D-ribose 1-phosphate: step 4/6. Its function is as follows. Bifunctional enzyme that catalyzes the enolization of 2,3-diketo-5-methylthiopentyl-1-phosphate (DK-MTP-1-P) into the intermediate 2-hydroxy-3-keto-5-methylthiopentenyl-1-phosphate (HK-MTPenyl-1-P), which is then dephosphorylated to form the acireductone 1,2-dihydroxy-3-keto-5-methylthiopentene (DHK-MTPene). This chain is Enolase-phosphatase E1, found in Naegleria gruberi (Amoeba).